The primary structure comprises 82 residues: MIIKEFLATEKAVKLIESQNTLTIIVNRNTTKKDIKNEVEKLFSVKVEKINTLITPKGEKKAYVKLKQEYKASDVAHKLGML.

This sequence belongs to the universal ribosomal protein uL23 family. In terms of assembly, part of the 50S ribosomal subunit. Contacts protein L29.

In terms of biological role, binds to 23S rRNA. One of the proteins that surrounds the polypeptide exit tunnel on the outside of the ribosome. The protein is Large ribosomal subunit protein uL23 of Sulfolobus acidocaldarius (strain ATCC 33909 / DSM 639 / JCM 8929 / NBRC 15157 / NCIMB 11770).